The following is a 139-amino-acid chain: Arsenate reductase (139 aa).

Active-site nucleophile residues include Cys-10, Cys-82, and Cys-89. 2 disulfide bridges follow: Cys-10-Cys-82 and Cys-82-Cys-89.

The protein belongs to the low molecular weight phosphotyrosine protein phosphatase family. Thioredoxin-coupled ArsC subfamily.

The protein localises to the cytoplasm. It carries out the reaction arsenate + [thioredoxin]-dithiol + H(+) = arsenite + [thioredoxin]-disulfide + H2O. Functionally, catalyzes the reduction of arsenate [As(V)] to arsenite [As(III)]. This is Arsenate reductase from Shouchella clausii (strain KSM-K16) (Alkalihalobacillus clausii).